We begin with the raw amino-acid sequence, 521 residues long: Ribonuclease Y 1 (521 aa).

Residues Met-1 to Ile-21 traverse the membrane as a helical segment. Residues Ile-51–Gln-87 are disordered. A KH domain is found at Thr-211 to Ile-271. Residues Ala-337–Ser-430 enclose the HD domain.

It belongs to the RNase Y family.

The protein resides in the cell membrane. In terms of biological role, endoribonuclease that initiates mRNA decay. The chain is Ribonuclease Y 1 from Bdellovibrio bacteriovorus (strain ATCC 15356 / DSM 50701 / NCIMB 9529 / HD100).